We begin with the raw amino-acid sequence, 822 residues long: Valine--tRNA ligase (822 aa).

The 'HIGH' region motif lies at 41-51 (PNVTGQLHLGH). A 'KMSKS' region motif is present at residues 511-515 (KMSKS). Lys514 provides a ligand contact to ATP. The stretch at 765–822 (EQKGRELKEIQFLKSEILRAEKILTNKGFLEKAPREKIDLERTKLEKLKEKLAFYEKK) forms a coiled coil.

It belongs to the class-I aminoacyl-tRNA synthetase family. ValS type 1 subfamily. In terms of assembly, monomer.

It is found in the cytoplasm. The enzyme catalyses tRNA(Val) + L-valine + ATP = L-valyl-tRNA(Val) + AMP + diphosphate. In terms of biological role, catalyzes the attachment of valine to tRNA(Val). As ValRS can inadvertently accommodate and process structurally similar amino acids such as threonine, to avoid such errors, it has a 'posttransfer' editing activity that hydrolyzes mischarged Thr-tRNA(Val) in a tRNA-dependent manner. The protein is Valine--tRNA ligase of Mesomycoplasma hyopneumoniae (strain 232) (Mycoplasma hyopneumoniae).